We begin with the raw amino-acid sequence, 1545 residues long: ATP-binding cassette sub-family C member 9 (1545 aa).

Topologically, residues 1–30 (MSLSFCGNNISSYNIYHGVLQNPCFVDALN) are extracellular. The N-linked (GlcNAc...) asparagine glycan is linked to N9. A helical transmembrane segment spans residues 31–51 (LVPHVFLLFITFPILFIGWGS). Residues 52–72 (QSSKVQIHHNTWLHFPGHNLR) lie on the Cytoplasmic side of the membrane. A helical transmembrane segment spans residues 73 to 93 (WILTFALLFVHVCEIAEGIVS). Residues 94–101 (DSQRASRH) lie on the Extracellular side of the membrane. Residues 102-122 (LHLFMPAVMGFVATTTSIVYY) form a helical membrane-spanning segment. The Cytoplasmic portion of the chain corresponds to 123-132 (HNIETSNFPK). Residues 133 to 153 (LLLALFLYWVMAFITKTIKLV) traverse the membrane as a helical segment. The Extracellular portion of the chain corresponds to 154 to 167 (KYWQLGWGMSDLRF). A helical transmembrane segment spans residues 168–188 (CITGVMVILNGLLMAVEINVI). Residues 189–301 (RVRRYVFFMN…AFGRPILLSS (113 aa)) are Cytoplasmic-facing. The ABC transmembrane type-1 1 domain occupies 297–594 (ILLSSTFRYL…LSTVVRFAVK (298 aa)). A helical membrane pass occupies residues 302–322 (TFRYLADLLGFAGPLCISGIV). The Extracellular portion of the chain corresponds to 323 to 347 (QRVNEPKNNTTRFSETLSSKEFLEN). N-linked (GlcNAc...) asparagine glycans are attached at residues N330 and N331. Residues 348-368 (AHVLAVLLFLALILQRTFLQA) traverse the membrane as a helical segment. Over 369–420 (SYYVTIETGINLRGALLAMIYNKILRLSTSNLSMGEMTLGQINNLVAIETNQ) the chain is Cytoplasmic. Residues 421–441 (LMWFLFLCPNLWAMPVQIIMG) traverse the membrane as a helical segment. Residues 442-452 (VILLYNLLGSS) are Extracellular-facing. Residues 453-473 (ALVGAAVIVLLAPIQYFIATK) traverse the membrane as a helical segment. The Cytoplasmic segment spans residues 474–528 (LAEAQKSTLDYSTERLKKTNEILKGIKLLKLYAWEHIFCKSVEETRMKELSSLKT). Residues 529 to 549 (FALYTSLSIFMNAAIPIAAVL) form a helical membrane-spanning segment. At 550 to 568 (ATFVTHAYASGNNLKPAEA) the chain is on the extracellular side. A helical membrane pass occupies residues 569–589 (FASLSLFHILVTPLFLLSTVV). The Cytoplasmic segment spans residues 590–986 (RFAVKAIISV…TCWWYLTSGG (397 aa)). One can recognise an ABC transporter 1 domain in the interval 668–908 (IKVTNGYFSW…DVELYEHWKT (241 aa)). Residue 701 to 708 (GQVGCGKS) participates in ATP binding. Residues 940 to 963 (REAKAQMEDEDEEEEEEEDEDDNM) form a disordered region. The segment covering 947 to 962 (EDEDEEEEEEEDEDDN) has biased composition (acidic residues). The chain crosses the membrane as a helical span at residues 987-1007 (FFLLFLMIFSKLLKHSVIVAI). The region spanning 990 to 1270 (LFLMIFSKLL…VVRNLADLEV (281 aa)) is the ABC transmembrane type-1 2 domain. Over 1008-1030 (DYWLATWTSEYSINDPGKADQTF) the chain is Extracellular. A helical transmembrane segment spans residues 1031–1051 (YVAGFSILCGAGIFLCLVTSL). Topologically, residues 1052-1123 (TVEWMGLTAA…TLLCLSAIGM (72 aa)) are cytoplasmic. Residues 1124-1144 (ISYATPVFLIALAPLGVAFYF) traverse the membrane as a helical segment. Over 1145–1241 (IQKYFRVASK…IASISGSSNS (97 aa)) the chain is Extracellular. Residues 1242 to 1262 (GLVGLGLLYALTITNYLNWVV) form a helical membrane-spanning segment. Residues 1263-1545 (RNLADLEVQM…LFSTLVMTNK (283 aa)) are Cytoplasmic-facing. The ABC transporter 2 domain occupies 1308–1542 (IKIHDLCVRY…KNGLFSTLVM (235 aa)). 1342-1349 (GRTGSGKS) serves as a coordination point for ATP.

It belongs to the ABC transporter superfamily. ABCC family. Conjugate transporter (TC 3.A.1.208) subfamily. In terms of assembly, interacts with KCNJ11. Interacts with KCNJ8. In terms of tissue distribution, expressed at high levels in heart, skeletal muscle and ovary. Moderate levels are found in brain, tongue and pancreatic islets. Low levels are found in lung, testis and adrenal gland. Expressed at very low levels in stomach, colon, thyroid and pituitary.

Its subcellular location is the membrane. Subunit of ATP-sensitive potassium channels (KATP). Can form cardiac and smooth muscle-type KATP channels with KCNJ11. KCNJ11 forms the channel pore while ABCC9 is required for activation and regulation. Can form a sulfonylurea-sensitive but ATP-insensitive potassium channel with KCNJ8. The polypeptide is ATP-binding cassette sub-family C member 9 (Abcc9) (Rattus norvegicus (Rat)).